The primary structure comprises 231 residues: Cilia- and flagella-associated protein 299 (231 aa).

The protein resides in the cytoplasm. The protein localises to the nucleus. Its function is as follows. May be involved in spermatogenesis. The polypeptide is Cilia- and flagella-associated protein 299 (Bos taurus (Bovine)).